The following is a 639-amino-acid chain: MPIQILPPQLANQIAAGEVVERPASVVKELVENSLDAGATRIDIDIERGGAKLIRIRDNGGGIGKAELALALARHATSKISTLDDLEAIVSLGFRGEALASISSVSRLTMTSRPEGQAEAWQAYAEGREMAVMVKPSAHPVGTTVEVLDLFYNTPARRKFLRTEKTEFAHIDEVVRRIALARFDITLTLQHNGKTVRQYRAVKEGDARERRLGAICGPVFVQHALALTWRHDELAIHGWVAAPQAIRQIGELQYCYVNGRMMRDRLITHAIRQAYQDRLSDEMPPAYVLYLEIDPRQVDVNVHPAKHEVRFHQARLVHDFIYQAVVEVLQQAQVASAHDDPTPAISGAARDEEPRGVENRASAGENRFNRPASSPVASAPRPAHVAAPRMPAGDIFRRREGELYQRLLAANPAPAAETDSAFVAAPGAPVTVAGPPAVAVSTAAENGAPGDSFGRVLTLCADGVALTECRSGVALVSLFHARRCLLRAQLQPPDEGLKAQPLLVPLRLTLEAAERQALKTQQPLLQQMGLRLQPERQHALLHAVPLPLRQQNLPRLIPQMLRYLATASVCDAASLADWLAAHWHSADEAPWTVAQAVQLLADLERLCPQLVQSPPRALLQPLDLQPGVDRLRQEEQLNE.

Residues 336-392 form a disordered region; it reads SAHDDPTPAISGAARDEEPRGVENRASAGENRFNRPASSPVASAPRPAHVAAPRMPA. Basic and acidic residues predominate over residues 349–358; the sequence is ARDEEPRGVE. Positions 370-392 are enriched in low complexity; the sequence is RPASSPVASAPRPAHVAAPRMPA.

This sequence belongs to the DNA mismatch repair MutL/HexB family.

Functionally, this protein is involved in the repair of mismatches in DNA. It is required for dam-dependent methyl-directed DNA mismatch repair. May act as a 'molecular matchmaker', a protein that promotes the formation of a stable complex between two or more DNA-binding proteins in an ATP-dependent manner without itself being part of a final effector complex. The protein is DNA mismatch repair protein MutL of Edwardsiella ictaluri (strain 93-146).